Consider the following 404-residue polypeptide: Sorting nexin-5 (404 aa).

A2 carries the post-translational modification N-acetylalanine. The 148-residue stretch at 25-172 (LNVDPSLQID…HVFLEYDQDL (148 aa)) folds into the PX domain. Residues 40–46 (SERDKVK), 99–105 (FDGPREK), and 113–116 (EGSM) contribute to the a 1,2-diacyl-sn-glycero-3-phospho-(1D-myo-inositol-4,5-bisphosphate) site. Positions 169–261 (DQDLSVRRKN…HSLALEEPTV (93 aa)) are interaction with DOCK1. The interval 183 to 200 (FGGFFKSVVKSADEVLFT) is membrane-binding amphipathic helix. Residue S193 is modified to Phosphoserine. The BAR domain maps to 202–404 (VKEVDDFFEQ…QSCIDLFKNN (203 aa)). An N6-acetyllysine modification is found at K275.

This sequence belongs to the sorting nexin family. In terms of assembly, forms heterodimers with BAR domain-containing sorting nexins SNX1 and SNX2; does not homodimerize. The heterodimers are proposed to self-assemble into helical arrays on the membrane to stabilize and expand local membrane curvature underlying endosomal tubule formation. Thought to be a component of the originally described retromer complex (also called SNX-BAR retromer) which is a pentamer containing the heterotrimeric retromer cargo-selective complex (CSC), also described as vacuolar protein sorting subcomplex (VPS), and a heterodimeric membrane-deforming subcomplex formed between SNX1 or SNX2 and SNX5 or SNX6 (also called SNX-BAR subcomplex); the respective CSC and SNX-BAR subcomplexes associate with low affinity. Interacts with SNX1, SNX2, VPS26A, VPS29, VPS35, DCTN1, DOCK1, MIB1, PIP5K1C isoform 3. Interacts with HGS; increased by PIP5K1C isoform 3 kinase activity and by PtdIns(3P) and/or PtdIns(3,4)P2. As to quaternary structure, (Microbial infection) Interacts with human cytomegalovirus proteins UL35 and UL35A; these interactions inhibit the ability of USP7 to form nuclear bodies.

The protein localises to the endosome. Its subcellular location is the early endosome. It is found in the early endosome membrane. The protein resides in the cell membrane. It localises to the cytoplasmic vesicle membrane. The protein localises to the cytoplasm. Its subcellular location is the cell projection. It is found in the phagocytic cup. The protein resides in the ruffle. In terms of biological role, involved in several stages of intracellular trafficking. Interacts with membranes containing phosphatidylinositol 3-phosphate (PtdIns(3P)) or phosphatidylinositol 3,4-bisphosphate (PtdIns(3,4)P2). Acts in part as component of the retromer membrane-deforming SNX-BAR subcomplex. The SNX-BAR retromer mediates retrograde transport of cargo proteins from endosomes to the trans-Golgi network (TGN) and is involved in endosome-to-plasma membrane transport for cargo protein recycling. The SNX-BAR subcomplex functions to deform the donor membrane into a tubular profile called endosome-to-TGN transport carrier (ETC). Does not have in vitro vesicle-to-membrane remodeling activity. Involved in retrograde transport of lysosomal enzyme receptor IGF2R. May function as link between endosomal transport vesicles and dynactin. Plays a role in the internalization of EGFR after EGF stimulation. Involved in EGFR endosomal sorting and degradation; the function involves PIP5K1C isoform 3 and is retromer-independent. Together with PIP5K1C isoform 3 facilitates HGS interaction with ubiquitinated EGFR, which initiates EGFR sorting to intraluminal vesicles (ILVs) of the multivesicular body for subsequent lysosomal degradation. Involved in E-cadherin sorting and degradation; inhibits PIP5K1C isoform 3-mediated E-cadherin degradation. Plays a role in macropinocytosis. This Homo sapiens (Human) protein is Sorting nexin-5 (SNX5).